The sequence spans 291 residues: Ribose-phosphate pyrophosphokinase (291 aa).

Residues 34–36 (DGE) and 92–93 (RQ) each bind ATP. Mg(2+) is bound by residues histidine 125 and aspartate 165. Lysine 188 is an active-site residue. The D-ribose 5-phosphate site is built by arginine 190 and aspartate 214.

Belongs to the ribose-phosphate pyrophosphokinase family. Class III (archaeal) subfamily. Requires Mg(2+) as cofactor.

Its subcellular location is the cytoplasm. It catalyses the reaction D-ribose 5-phosphate + ATP = 5-phospho-alpha-D-ribose 1-diphosphate + AMP + H(+). It functions in the pathway metabolic intermediate biosynthesis; 5-phospho-alpha-D-ribose 1-diphosphate biosynthesis; 5-phospho-alpha-D-ribose 1-diphosphate from D-ribose 5-phosphate (route I): step 1/1. Functionally, involved in the biosynthesis of the central metabolite phospho-alpha-D-ribosyl-1-pyrophosphate (PRPP) via the transfer of pyrophosphoryl group from ATP to 1-hydroxyl of ribose-5-phosphate (Rib-5-P). This is Ribose-phosphate pyrophosphokinase from Methanopyrus kandleri (strain AV19 / DSM 6324 / JCM 9639 / NBRC 100938).